Consider the following 234-residue polypeptide: Uridylate kinase (234 aa).

10-11 is an ATP binding site; it reads GS. UMP is bound at residue Gly44. Positions 45 and 49 each coordinate ATP. UMP-binding positions include Asp66 and 114 to 120; that span reads ITPGQTT. Thr140, Tyr146, and Asp149 together coordinate ATP.

This sequence belongs to the UMP kinase family. As to quaternary structure, homohexamer.

Its subcellular location is the cytoplasm. It catalyses the reaction UMP + ATP = UDP + ADP. It functions in the pathway pyrimidine metabolism; CTP biosynthesis via de novo pathway; UDP from UMP (UMPK route): step 1/1. With respect to regulation, inhibited by UTP. In terms of biological role, catalyzes the reversible phosphorylation of UMP to UDP. In Methanoregula boonei (strain DSM 21154 / JCM 14090 / 6A8), this protein is Uridylate kinase.